A 284-amino-acid chain; its full sequence is Elongation factor Ts (284 aa).

Residues 80-83 (TDFV) are involved in Mg(2+) ion dislocation from EF-Tu.

This sequence belongs to the EF-Ts family.

The protein resides in the cytoplasm. Its function is as follows. Associates with the EF-Tu.GDP complex and induces the exchange of GDP to GTP. It remains bound to the aminoacyl-tRNA.EF-Tu.GTP complex up to the GTP hydrolysis stage on the ribosome. The chain is Elongation factor Ts from Neisseria gonorrhoeae (strain ATCC 700825 / FA 1090).